The sequence spans 328 residues: DNA-directed RNA polymerase subunit alpha (328 aa).

Residues 1–231 (MQTNLLKPKA…EQLAVFAQLE (231 aa)) are alpha N-terminal domain (alpha-NTD). Residues 248–328 (FDPILLRPVD…NWPPQGLDKR (81 aa)) form an alpha C-terminal domain (alpha-CTD) region.

Belongs to the RNA polymerase alpha chain family. In terms of assembly, homodimer. The RNAP catalytic core consists of 2 alpha, 1 beta, 1 beta' and 1 omega subunit. When a sigma factor is associated with the core the holoenzyme is formed, which can initiate transcription.

It carries out the reaction RNA(n) + a ribonucleoside 5'-triphosphate = RNA(n+1) + diphosphate. DNA-dependent RNA polymerase catalyzes the transcription of DNA into RNA using the four ribonucleoside triphosphates as substrates. This Leptothrix cholodnii (strain ATCC 51168 / LMG 8142 / SP-6) (Leptothrix discophora (strain SP-6)) protein is DNA-directed RNA polymerase subunit alpha.